A 466-amino-acid chain; its full sequence is Cytochrome b561 and DOMON domain-containing protein At3g59070 (466 aa).

The signal sequence occupies residues 1 to 25 (MSLSSRATLVVLCCLFMLIPSFTTA). The DOMON domain occupies 57–172 (LNSYLHFNYA…TVVNHLWQDG (116 aa)). The Cytochrome b561 domain occupies 179–380 (RLGMHAMSGD…MEILQFKKRW (202 aa)). Transmembrane regions (helical) follow at residues 219 to 239 (IHAI…VMAA), 252 to 272 (WFYI…IGGL), and 287 to 307 (TLHT…ILSL). 4 residues coordinate heme b: histidine 220, histidine 256, histidine 289, and histidine 325. 2 helical membrane-spanning segments follow: residues 327-347 (TMGY…LSIL) and 355-375 (IAYT…EILQ).

Heme b is required as a cofactor.

The protein resides in the membrane. In terms of biological role, may act as a catecholamine-responsive trans-membrane electron transporter. This Arabidopsis thaliana (Mouse-ear cress) protein is Cytochrome b561 and DOMON domain-containing protein At3g59070.